An 89-amino-acid polypeptide reads, in one-letter code: Small ribosomal subunit protein uS14B (89 aa).

The interval 38–61 (KLPKDAHPSRLKLRDQTDGRPRGY) is disordered. The segment covering 39-58 (LPKDAHPSRLKLRDQTDGRP) has biased composition (basic and acidic residues).

The protein belongs to the universal ribosomal protein uS14 family. In terms of assembly, part of the 30S ribosomal subunit. Contacts proteins S3 and S10.

Functionally, binds 16S rRNA, required for the assembly of 30S particles and may also be responsible for determining the conformation of the 16S rRNA at the A site. This Enterococcus faecalis (strain ATCC 700802 / V583) protein is Small ribosomal subunit protein uS14B.